The following is a 402-amino-acid chain: C2H2 finger domain transcription factor CON7 (402 aa).

A disordered region spans residues 1–247 (MLASSRQPRH…GAQQHKRPRR (247 aa)). Polar residues-rich tracts occupy residues 19–49 (LSSSTLHRSGSPQTGTLRQDATTPTLATSVG) and 72–86 (CGDNQSEAQSVTVDT). Low complexity predominate over residues 87–98 (SSAAQYNASAQQ). 2 stretches are compositionally biased toward polar residues: residues 99 to 116 (EVRSNNPGNYSASATPTS) and 125 to 151 (ARSSSFPDHLQQRSYHPASNHSGSSGD). A C2H2-type zinc finger spans residues 256–282 (YKCGWQGCEKAYGTLNHLNAHVTMQSH). Positions 289–323 (EEFKEIRKEWKARKKEEEAARKADEERQRQAAQSQ) form a coiled coil. A compositionally biased stretch (basic and acidic residues) spans 302-317 (KKEEEAARKADEERQR). A disordered region spans residues 302 to 402 (KKEEEAARKA…GSNQAMYNQR (101 aa)). Polar residues-rich tracts occupy residues 322–341 (SQGGSTEGQAGSDVSQSSNG), 363–373 (AATSTSVQQQP), and 392–402 (GGSNQAMYNQR).

It is found in the nucleus. Its function is as follows. Transcription factor that plays a central role in appressorium formation and pathogenicity. Required for the expression of a large set of genes including factors that might play a role in membrane metabolism and ergosterol biosynthesis, the chitin-binding protein CBP1,as well as CHS7 that is essential for normal pathogenic development. This Pyricularia oryzae (strain 70-15 / ATCC MYA-4617 / FGSC 8958) (Rice blast fungus) protein is C2H2 finger domain transcription factor CON7.